The chain runs to 933 residues: Serine/threonine-protein kinase PknD (933 aa).

A Protein kinase domain is found at 4 to 291 (YDIIRMIGKG…ELKDDIEQHL (288 aa)). Residues 10-18 (IGKGGMGEV) and lysine 33 each bind ATP. Aspartate 138 functions as the Proton acceptor in the catalytic mechanism.

Belongs to the protein kinase superfamily. Ser/Thr protein kinase family. Post-translationally, autophosphorylated on serine and threonine residues.

It carries out the reaction L-seryl-[protein] + ATP = O-phospho-L-seryl-[protein] + ADP + H(+). The enzyme catalyses L-threonyl-[protein] + ATP = O-phospho-L-threonyl-[protein] + ADP + H(+). Its function is as follows. Together with the serine/threonine kinase Pkn1, may play a role in the specific interactions with host proteins during intracellular growth. This Chlamydia felis (strain Fe/C-56) (Chlamydophila felis) protein is Serine/threonine-protein kinase PknD.